The sequence spans 530 residues: Probable cytochrome P450 519A1 (530 aa).

Residues 1–21 (MESIINLIFYIIIFLILIDFL) form a helical membrane-spanning segment. Residue C476 participates in heme binding.

Belongs to the cytochrome P450 family. Requires heme as cofactor.

The protein localises to the membrane. This is Probable cytochrome P450 519A1 (cyp519A1) from Dictyostelium discoideum (Social amoeba).